Consider the following 360-residue polypeptide: Secreted LysM effector LysM2 (360 aa).

Residues 1–21 form the signal peptide; it reads MKISSLSILPLLGVVSAGIHG. The region spanning 37–85 is the LysM 1 domain; the sequence is TWYLDLVDDSYTCENIESQWDLSHEAFVAWNPGVKKDCSGLKVGLSVCV. Residues 94 to 113 are compositionally biased toward low complexity; that stretch reads ATPTSEASTSSETSSASPTA. The interval 94 to 125 is disordered; that stretch reads ATPTSEASTSSETSSASPTASRPPLPSPTQDG. An N-linked (GlcNAc...) asparagine glycan is attached at Asn129. In terms of domain architecture, LysM 2 spans 132–179; the sequence is KFHQAVSGDTCSKIISRYKPITLDQFIEWNPALEKDCSGLWSGYYYCV. N-linked (GlcNAc...) asparagine glycosylation is present at Asn204. LysM domains are found at residues 225 to 272 and 311 to 357; these read RWHK…YYCI and KWHQ…YVCV.

This sequence belongs to the secreted LysM effector family.

Its subcellular location is the secreted. It localises to the cell wall. Its function is as follows. Secreted effector that binds two substrates, chitin and N-linked oligosaccharides associated with human skin glycoproteins. Could provide the pathogen with three important functions including shielding host cell wall chitin from the human immune system, shielding the pathogen's glycoproteins from host degradation and immune surveillance, and helping facilitate pathogen adhesion to human skin. The polypeptide is Secreted LysM effector LysM2 (Trichophyton rubrum (strain ATCC MYA-4607 / CBS 118892) (Athlete's foot fungus)).